The primary structure comprises 509 residues: Ribonuclease Y (509 aa).

The helical transmembrane segment at 1-21 (MIILVAVVTAVISFGLGYVVA) threads the bilayer. The KH domain maps to 199–259 (TVSTVSLPSD…IRREIARLTL (61 aa)). Positions 325 to 418 (VLDHSIEVAQ…VAAADALSAA (94 aa)) constitute an HD domain.

This sequence belongs to the RNase Y family.

The protein resides in the cell membrane. In terms of biological role, endoribonuclease that initiates mRNA decay. The protein is Ribonuclease Y of Pseudothermotoga lettingae (strain ATCC BAA-301 / DSM 14385 / NBRC 107922 / TMO) (Thermotoga lettingae).